A 267-amino-acid chain; its full sequence is 4-hydroxy-tetrahydrodipicolinate reductase (267 aa).

NAD(+)-binding positions include 8 to 13 (GAAGRM), Glu34, 98 to 100 (GST), and 122 to 125 (APNM). His155 (proton donor/acceptor) is an active-site residue. His156 serves as a coordination point for (S)-2,3,4,5-tetrahydrodipicolinate. Residue Lys159 is the Proton donor of the active site. A (S)-2,3,4,5-tetrahydrodipicolinate-binding site is contributed by 165-166 (GT).

This sequence belongs to the DapB family.

It is found in the cytoplasm. The catalysed reaction is (S)-2,3,4,5-tetrahydrodipicolinate + NAD(+) + H2O = (2S,4S)-4-hydroxy-2,3,4,5-tetrahydrodipicolinate + NADH + H(+). It catalyses the reaction (S)-2,3,4,5-tetrahydrodipicolinate + NADP(+) + H2O = (2S,4S)-4-hydroxy-2,3,4,5-tetrahydrodipicolinate + NADPH + H(+). The protein operates within amino-acid biosynthesis; L-lysine biosynthesis via DAP pathway; (S)-tetrahydrodipicolinate from L-aspartate: step 4/4. In terms of biological role, catalyzes the conversion of 4-hydroxy-tetrahydrodipicolinate (HTPA) to tetrahydrodipicolinate. In Syntrophotalea carbinolica (strain DSM 2380 / NBRC 103641 / GraBd1) (Pelobacter carbinolicus), this protein is 4-hydroxy-tetrahydrodipicolinate reductase.